The primary structure comprises 446 residues: BAG family molecular chaperone regulator 7 (446 aa).

Positions 230–252 are disordered; the sequence is TGGEKKKKHEEKEKKEKIETKSK. Positions 239 to 250 are enriched in basic and acidic residues; it reads EEKEKKEKIETK. Residues 303-332 enclose the IQ domain; it reads PEYAAVMIQRAFKAYLIRRSKSLRALRDLA. One can recognise a BAG domain in the interval 330–407; that stretch reads DLAIAKTKLK…AMLDVVDPQP (78 aa). Phosphothreonine is present on threonine 443.

In terms of assembly, binds to the ATPase domain of HSP70/HSC70 chaperones. Interacts with HSP70-11/BIP2.

Its subcellular location is the endoplasmic reticulum. Functionally, co-chaperone that regulates diverse cellular pathways, such as programmed cell death and stress responses. Necessary for the proper maintenance of the unfolded protein response (UPR) during heat and cold tolerance. This is BAG family molecular chaperone regulator 7 (BAG7) from Arabidopsis thaliana (Mouse-ear cress).